The primary structure comprises 193 residues: MEPFRIHKGTAAVLMNDNIDTDQIIPKQYLKRIERTGFGKYLFDEWRYDNERHENPNFPLNAPDRKGASILITGDNFGCGSSREHAPWALADYGFRVIIAGGFADIFYMNCMKNGMLPIVMDKEMREKLAKTDAREQIEVNLENEVITTSTHRFHFTIEKMWKEKLLNGLDEISITMQYEQEIKEYERMVAVY.

It belongs to the LeuD family. LeuD type 1 subfamily. Heterodimer of LeuC and LeuD.

It carries out the reaction (2R,3S)-3-isopropylmalate = (2S)-2-isopropylmalate. The protein operates within amino-acid biosynthesis; L-leucine biosynthesis; L-leucine from 3-methyl-2-oxobutanoate: step 2/4. In terms of biological role, catalyzes the isomerization between 2-isopropylmalate and 3-isopropylmalate, via the formation of 2-isopropylmaleate. This is 3-isopropylmalate dehydratase small subunit from Bacillus cereus (strain ATCC 10987 / NRS 248).